We begin with the raw amino-acid sequence, 122 residues long: Holo-[acyl-carrier-protein] synthase (122 aa).

The Mg(2+) site is built by aspartate 5 and glutamate 54.

It belongs to the P-Pant transferase superfamily. AcpS family. Requires Mg(2+) as cofactor.

Its subcellular location is the cytoplasm. It carries out the reaction apo-[ACP] + CoA = holo-[ACP] + adenosine 3',5'-bisphosphate + H(+). Transfers the 4'-phosphopantetheine moiety from coenzyme A to a Ser of acyl-carrier-protein. This is Holo-[acyl-carrier-protein] synthase from Aquifex aeolicus (strain VF5).